The sequence spans 197 residues: 3-isopropylmalate dehydratase small subunit (197 aa).

This sequence belongs to the LeuD family. LeuD type 1 subfamily. In terms of assembly, heterodimer of LeuC and LeuD.

The enzyme catalyses (2R,3S)-3-isopropylmalate = (2S)-2-isopropylmalate. It participates in amino-acid biosynthesis; L-leucine biosynthesis; L-leucine from 3-methyl-2-oxobutanoate: step 2/4. Its function is as follows. Catalyzes the isomerization between 2-isopropylmalate and 3-isopropylmalate, via the formation of 2-isopropylmaleate. This Streptomyces avermitilis (strain ATCC 31267 / DSM 46492 / JCM 5070 / NBRC 14893 / NCIMB 12804 / NRRL 8165 / MA-4680) protein is 3-isopropylmalate dehydratase small subunit.